A 493-amino-acid polypeptide reads, in one-letter code: 3-octaprenyl-4-hydroxybenzoate carboxy-lyase (493 aa).

N172 contacts Mn(2+). Prenylated FMN-binding positions include 175–177 (IYR), 189–191 (RWL), and 194–195 (RG). E238 contacts Mn(2+). Residue D287 is the Proton donor of the active site.

It belongs to the UbiD family. As to quaternary structure, homohexamer. Requires prenylated FMN as cofactor. It depends on Mn(2+) as a cofactor.

Its subcellular location is the cell membrane. It carries out the reaction a 4-hydroxy-3-(all-trans-polyprenyl)benzoate + H(+) = a 2-(all-trans-polyprenyl)phenol + CO2. The protein operates within cofactor biosynthesis; ubiquinone biosynthesis. Functionally, catalyzes the decarboxylation of 3-octaprenyl-4-hydroxy benzoate to 2-octaprenylphenol, an intermediate step in ubiquinone biosynthesis. The protein is 3-octaprenyl-4-hydroxybenzoate carboxy-lyase of Shewanella loihica (strain ATCC BAA-1088 / PV-4).